We begin with the raw amino-acid sequence, 119 residues long: Large ribosomal subunit protein uL22 (119 aa).

The protein belongs to the universal ribosomal protein uL22 family. As to quaternary structure, part of the 50S ribosomal subunit.

Functionally, this protein binds specifically to 23S rRNA; its binding is stimulated by other ribosomal proteins, e.g. L4, L17, and L20. It is important during the early stages of 50S assembly. It makes multiple contacts with different domains of the 23S rRNA in the assembled 50S subunit and ribosome. In terms of biological role, the globular domain of the protein is located near the polypeptide exit tunnel on the outside of the subunit, while an extended beta-hairpin is found that lines the wall of the exit tunnel in the center of the 70S ribosome. The polypeptide is Large ribosomal subunit protein uL22 (Trichormus variabilis (strain ATCC 29413 / PCC 7937) (Anabaena variabilis)).